The primary structure comprises 463 residues: Glycogen synthase (463 aa).

Residue Lys15 coordinates ADP-alpha-D-glucose.

This sequence belongs to the glycosyltransferase 1 family. Bacterial/plant glycogen synthase subfamily.

The enzyme catalyses [(1-&gt;4)-alpha-D-glucosyl](n) + ADP-alpha-D-glucose = [(1-&gt;4)-alpha-D-glucosyl](n+1) + ADP + H(+). It participates in glycan biosynthesis; glycogen biosynthesis. In terms of biological role, synthesizes alpha-1,4-glucan chains using ADP-glucose. This Aquifex aeolicus (strain VF5) protein is Glycogen synthase.